The chain runs to 129 residues: Small ribosomal subunit protein uS8 (129 aa).

It belongs to the universal ribosomal protein uS8 family. In terms of assembly, part of the 30S ribosomal subunit.

Its function is as follows. One of the primary rRNA binding proteins, it binds directly to 16S rRNA central domain where it helps coordinate assembly of the platform of the 30S subunit. The polypeptide is Small ribosomal subunit protein uS8 (Nanoarchaeum equitans (strain Kin4-M)).